Consider the following 378-residue polypeptide: Succinyl-diaminopimelate desuccinylase (378 aa).

Histidine 68 provides a ligand contact to Zn(2+). The active site involves aspartate 70. Residue aspartate 101 coordinates Zn(2+). Glutamate 135 (proton acceptor) is an active-site residue. 3 residues coordinate Zn(2+): glutamate 136, glutamate 164, and histidine 350.

It belongs to the peptidase M20A family. DapE subfamily. As to quaternary structure, homodimer. The cofactor is Zn(2+). It depends on Co(2+) as a cofactor.

It catalyses the reaction N-succinyl-(2S,6S)-2,6-diaminopimelate + H2O = (2S,6S)-2,6-diaminopimelate + succinate. It participates in amino-acid biosynthesis; L-lysine biosynthesis via DAP pathway; LL-2,6-diaminopimelate from (S)-tetrahydrodipicolinate (succinylase route): step 3/3. Functionally, catalyzes the hydrolysis of N-succinyl-L,L-diaminopimelic acid (SDAP), forming succinate and LL-2,6-diaminopimelate (DAP), an intermediate involved in the bacterial biosynthesis of lysine and meso-diaminopimelic acid, an essential component of bacterial cell walls. This chain is Succinyl-diaminopimelate desuccinylase, found in Vibrio parahaemolyticus serotype O3:K6 (strain RIMD 2210633).